A 1250-amino-acid chain; its full sequence is DNA repair protein REV1 (1250 aa).

Residues 44–131 (TSSTIFSGVA…RLLSYIPYQL (88 aa)) form the BRCT domain. 2 disordered regions span residues 204-236 (EQTS…NGAL) and 252-329 (RLSP…TSSV). Over residues 260 to 273 (EEDKAEKSSTDFRD) the composition is skewed to basic and acidic residues. Positions 275–320 (TLQQLQQSTRNTDALRNPHRTNSFSLSPLHSNTKINGAHHSTVQGP) are enriched in polar residues. The segment at 352-362 (FYSHSRLHHIS) is interaction with target DNA. Residues arginine 357, 423–427 (DMDCF), 509–515 (SCSYEAR), asparagine 521, and aspartate 569 contribute to the dCTP site. The 234-residue stretch at 419–652 (IMHVDMDCFF…QLVTNLPGVG (234 aa)) folds into the UmuC domain. Aspartate 423 serves as a coordination point for Mg(2+). Mg(2+) contacts are provided by aspartate 569 and glutamate 570. 2 interaction with target DNA regions span residues 652 to 655 (GHSM) and 708 to 716 (RKSVSAEIN). Basic and acidic residues predominate over residues 1034–1045 (AYDQRQRQDENS). Disordered stretches follow at residues 1034–1101 (AYDQ…AKTL) and 1117–1146 (KHEG…LQSD). Residues 1046–1055 (THQQSASASV) are compositionally biased toward polar residues. Residues 1069–1078 (EKKRNKKKKT) are compositionally biased toward basic residues. A Nuclear localization signal motif is present at residues 1071–1077 (KRNKKKK). A compositionally biased stretch (basic and acidic residues) spans 1117–1128 (KHEGPPAEKPLE). Residues 1131 to 1145 (SASTSGVPGLSSLQS) show a composition bias toward polar residues. The protein interaction domain; mediates interaction with DNA polymerase zeta stretch occupies residues 1151-1250 (VRPPAPNLAG…QTYGSTLKVT (100 aa)).

It belongs to the DNA polymerase type-Y family. In terms of assembly, monomer. Interacts with the DNA polymerase zeta which is composed of REV3L and MAD2L2; the interaction with MAD2L2 is direct and requires that REV3L is in its closed conformation. Interacts with POLH, POLI and POLK. Interacts with FAAP20.

It localises to the nucleus. In terms of biological role, deoxycytidyl transferase involved in DNA repair. Transfers a dCMP residue from dCTP to the 3'-end of a DNA primer in a template-dependent reaction. May assist in the first step in the bypass of abasic lesions by the insertion of a nucleotide opposite the lesion. Required for normal induction of mutations by physical and chemical agents. This Pongo abelii (Sumatran orangutan) protein is DNA repair protein REV1 (REV1).